The sequence spans 131 residues: Large ribosomal subunit protein bL17 (131 aa).

Belongs to the bacterial ribosomal protein bL17 family. In terms of assembly, part of the 50S ribosomal subunit. Contacts protein L32.

This is Large ribosomal subunit protein bL17 from Polynucleobacter necessarius subsp. necessarius (strain STIR1).